Here is a 72-residue protein sequence, read N- to C-terminus: MAKDNVIEIEGTVKETMPNAMFKVELENGHEILAHVSGKIRMHYIKILPGDKVTVEMSPYDLSKGRITYRFK.

The region spanning Met-1 to Lys-72 is the S1-like domain.

It belongs to the IF-1 family. Component of the 30S ribosomal translation pre-initiation complex which assembles on the 30S ribosome in the order IF-2 and IF-3, IF-1 and N-formylmethionyl-tRNA(fMet); mRNA recruitment can occur at any time during PIC assembly.

It is found in the cytoplasm. Functionally, one of the essential components for the initiation of protein synthesis. Stabilizes the binding of IF-2 and IF-3 on the 30S subunit to which N-formylmethionyl-tRNA(fMet) subsequently binds. Helps modulate mRNA selection, yielding the 30S pre-initiation complex (PIC). Upon addition of the 50S ribosomal subunit IF-1, IF-2 and IF-3 are released leaving the mature 70S translation initiation complex. The chain is Translation initiation factor IF-1 from Pediococcus pentosaceus (strain ATCC 25745 / CCUG 21536 / LMG 10740 / 183-1w).